Here is a 448-residue protein sequence, read N- to C-terminus: Ribulose bisphosphate carboxylase large chain (448 aa).

Residues 1 to 2 (MS) constitute a propeptide that is removed on maturation. An N-acetylproline modification is found at proline 3. Lysine 14 is modified (N6,N6,N6-trimethyllysine). Substrate contacts are provided by asparagine 122 and threonine 172. Lysine 174 serves as the catalytic Proton acceptor. Lysine 176 lines the substrate pocket. Mg(2+)-binding residues include lysine 200, aspartate 202, and glutamate 203. Residue lysine 200 is modified to N6-carboxylysine. Histidine 293 serves as the catalytic Proton acceptor. Substrate-binding residues include arginine 294, histidine 326, and serine 378.

Belongs to the RuBisCO large chain family. Type I subfamily. Heterohexadecamer of 8 large chains and 8 small chains; disulfide-linked. The disulfide link is formed within the large subunit homodimers. Mg(2+) is required as a cofactor. In terms of processing, the disulfide bond which can form in the large chain dimeric partners within the hexadecamer appears to be associated with oxidative stress and protein turnover.

Its subcellular location is the plastid. The protein resides in the chloroplast. The enzyme catalyses 2 (2R)-3-phosphoglycerate + 2 H(+) = D-ribulose 1,5-bisphosphate + CO2 + H2O. It catalyses the reaction D-ribulose 1,5-bisphosphate + O2 = 2-phosphoglycolate + (2R)-3-phosphoglycerate + 2 H(+). Its function is as follows. RuBisCO catalyzes two reactions: the carboxylation of D-ribulose 1,5-bisphosphate, the primary event in carbon dioxide fixation, as well as the oxidative fragmentation of the pentose substrate in the photorespiration process. Both reactions occur simultaneously and in competition at the same active site. The sequence is that of Ribulose bisphosphate carboxylase large chain from Dichapetalum crassifolium.